A 430-amino-acid polypeptide reads, in one-letter code: Adenylosuccinate synthetase (430 aa).

GTP-binding positions include 13-19 (GDEGKGK) and 41-43 (GHT). Asp-14 serves as the catalytic Proton acceptor. The Mg(2+) site is built by Asp-14 and Gly-41. IMP is bound by residues 14–17 (DEGK), 39–42 (NAGH), Thr-130, Arg-144, Gln-225, Thr-240, and Arg-304. His-42 (proton donor) is an active-site residue. 300–306 (ASTGRPR) is a binding site for substrate. Residues Arg-306, 332–334 (KLD), and 414–416 (STG) contribute to the GTP site.

It belongs to the adenylosuccinate synthetase family. As to quaternary structure, homodimer. Mg(2+) serves as cofactor.

The protein resides in the cytoplasm. The enzyme catalyses IMP + L-aspartate + GTP = N(6)-(1,2-dicarboxyethyl)-AMP + GDP + phosphate + 2 H(+). It participates in purine metabolism; AMP biosynthesis via de novo pathway; AMP from IMP: step 1/2. In terms of biological role, plays an important role in the de novo pathway of purine nucleotide biosynthesis. Catalyzes the first committed step in the biosynthesis of AMP from IMP. The chain is Adenylosuccinate synthetase from Xanthomonas axonopodis pv. citri (strain 306).